The following is a 179-amino-acid chain: tRNA (cytidine(56)-2'-O)-methyltransferase (179 aa).

S-adenosyl-L-methionine is bound by residues Leu-82, 112 to 116 (GAEKV), and 130 to 137 (VGNQPHSE).

It belongs to the aTrm56 family. In terms of assembly, homodimer.

The protein localises to the cytoplasm. It catalyses the reaction cytidine(56) in tRNA + S-adenosyl-L-methionine = 2'-O-methylcytidine(56) in tRNA + S-adenosyl-L-homocysteine + H(+). In terms of biological role, specifically catalyzes the AdoMet-dependent 2'-O-ribose methylation of cytidine at position 56 in tRNAs. The protein is tRNA (cytidine(56)-2'-O)-methyltransferase of Methanococcus maripaludis (strain C5 / ATCC BAA-1333).